A 145-amino-acid chain; its full sequence is Natriuretic peptides A (145 aa).

The signal sequence occupies residues 1–23 (MGTSFVGYLTFVLLLLALTKVRG). A propeptide spanning residues 24-117 (GPAYNSPLSS…KLRELLNAPR (94 aa)) is cleaved from the precursor. The cysteines at positions 125 and 141 are disulfide-linked.

This sequence belongs to the natriuretic peptide family. Cleaved upon secretion to produce the functional hormone.

The protein resides in the secreted. Its function is as follows. Hormone playing a key role in cardiovascular homeostasis through regulation of natriuresis, diuresis, and vasodilation. Has a cGMP-stimulating activity. This Aquarana catesbeiana (American bullfrog) protein is Natriuretic peptides A.